Reading from the N-terminus, the 1039-residue chain is Multidrug resistance protein MdtB (1039 aa).

Transmembrane regions (helical) follow at residues 16-36 (FILR…AGII), 342-362 (DVQF…YVFL), 373-393 (VAVP…GFSI), 396-416 (LTLM…IVVI), 440-460 (IGFT…PLLF), 472-492 (FAVT…TLTP), 537-557 (WLTL…YLLI), 863-883 (LGGT…VLGV), 888-908 (FIHP…ALLA), 911-931 (MAGS…IGIV), 968-988 (ILMT…STGV), and 1002-1022 (GGLV…YLLF).

The protein belongs to the resistance-nodulation-cell division (RND) (TC 2.A.6) family. MdtB subfamily. As to quaternary structure, part of a tripartite efflux system composed of MdtA, MdtB and MdtC. MdtB forms a heteromultimer with MdtC.

Its subcellular location is the cell inner membrane. In Serratia proteamaculans (strain 568), this protein is Multidrug resistance protein MdtB.